We begin with the raw amino-acid sequence, 487 residues long: NADH-quinone oxidoreductase subunit N (487 aa).

13 consecutive transmembrane segments (helical) span residues 18–38 (LVPELVLIGGAFALLMLDLFV), 44–64 (VWTHLFSVAVLAVVLVLLATG), 84–104 (VMKTVIVLVSGLSLVYGWTYL), 116–136 (VLVLFATAGMMLLASAGSLLM), 169–189 (FVLGSLASGLLLYGMSLVYGA), 211–231 (LLTGTIFMIAGVAFKLGAAPF), 242–262 (APAPIALFISSAPKLAAFGMA), 277–297 (WHLLIGGLSAVSLVVGNLMAI), 305–325 (MLAYSTVSHIGFLLMGVAGGG), 333–353 (MFYAVSYTIMSTASFGAIIAL), 377–397 (AGLVLCIMASLAGIPPFLGFW), 410–430 (DMLWLALVGVICAVIGAYYYL), and 457–477 (VLGVNALALLALGLAWSPIMV).

This sequence belongs to the complex I subunit 2 family. NDH-1 is composed of 14 different subunits. Subunits NuoA, H, J, K, L, M, N constitute the membrane sector of the complex.

Its subcellular location is the cell inner membrane. It catalyses the reaction a quinone + NADH + 5 H(+)(in) = a quinol + NAD(+) + 4 H(+)(out). Functionally, NDH-1 shuttles electrons from NADH, via FMN and iron-sulfur (Fe-S) centers, to quinones in the respiratory chain. The immediate electron acceptor for the enzyme in this species is believed to be ubiquinone. Couples the redox reaction to proton translocation (for every two electrons transferred, four hydrogen ions are translocated across the cytoplasmic membrane), and thus conserves the redox energy in a proton gradient. This is NADH-quinone oxidoreductase subunit N from Xanthomonas euvesicatoria pv. vesicatoria (strain 85-10) (Xanthomonas campestris pv. vesicatoria).